Reading from the N-terminus, the 393-residue chain is Probable acetyl-CoA acetyltransferase (393 aa).

Cysteine 88 serves as the catalytic Acyl-thioester intermediate. Residues histidine 348 and cysteine 378 each act as proton acceptor in the active site.

The protein belongs to the thiolase-like superfamily. Thiolase family.

It localises to the cytoplasm. The catalysed reaction is 2 acetyl-CoA = acetoacetyl-CoA + CoA. The protein is Probable acetyl-CoA acetyltransferase (yqeF) of Escherichia coli (strain K12).